Reading from the N-terminus, the 111-residue chain is MSFHVTAEDARIEVRDNRTILFARLRREDGEWNDASYELDQIIGNNDGHFQWGGQNFTETAEDIRFHPKEGAAEQPILRARLRDCNGEFHDRDVNLTEIVENVNGEFQAKF.

The protein belongs to the cyanovirin-N family.

In terms of biological role, mannose-binding lectin. The protein is Cyanovirin-N homolog of Neurospora crassa (strain ATCC 24698 / 74-OR23-1A / CBS 708.71 / DSM 1257 / FGSC 987).